The primary structure comprises 214 residues: Putative archaetidylserine decarboxylase proenzyme (214 aa).

Residue S180 is the Schiff-base intermediate with substrate; via pyruvic acid of the active site. S180 carries the post-translational modification Pyruvic acid (Ser); by autocatalysis.

The protein belongs to the phosphatidylserine decarboxylase family. PSD-A subfamily. As to quaternary structure, heterodimer of a large membrane-associated beta subunit and a small pyruvoyl-containing alpha subunit. The cofactor is pyruvate. In terms of processing, is synthesized initially as an inactive proenzyme. Formation of the active enzyme involves a self-maturation process in which the active site pyruvoyl group is generated from an internal serine residue via an autocatalytic post-translational modification. Two non-identical subunits are generated from the proenzyme in this reaction, and the pyruvate is formed at the N-terminus of the alpha chain, which is derived from the carboxyl end of the proenzyme. The post-translation cleavage follows an unusual pathway, termed non-hydrolytic serinolysis, in which the side chain hydroxyl group of the serine supplies its oxygen atom to form the C-terminus of the beta chain, while the remainder of the serine residue undergoes an oxidative deamination to produce ammonia and the pyruvoyl prosthetic group on the alpha chain.

The protein localises to the cell membrane. It carries out the reaction archaetidylserine + H(+) = archaetidylethanolamine + CO2. Its function is as follows. Catalyzes the formation of archaetidylethanolamine (PtdEtn) from archaetidylserine (PtdSer). The chain is Putative archaetidylserine decarboxylase proenzyme from Methanopyrus kandleri (strain AV19 / DSM 6324 / JCM 9639 / NBRC 100938).